The sequence spans 398 residues: Probable transcription factor PosF21 (398 aa).

Disordered regions lie at residues 1–46 (MDKE…HDIS) and 112–150 (ATSS…NSLG). The segment covering 7 to 19 (PAPPCGGLPPPSP) has biased composition (pro residues). Over residues 125 to 148 (AWKNETMMQTGTGSTSNPQNTVNS) the composition is skewed to polar residues. Residues 201–264 (DPKRAKRIWA…NGLTVENNEL (64 aa)) form the bZIP domain. The interval 203 to 224 (KRAKRIWANRQSAARSKERKTR) is basic motif. A leucine-zipper region spans residues 229–264 (LERKVQTLQTEATTLSAQLTLLQRDTNGLTVENNEL).

Belongs to the bZIP family.

It is found in the nucleus. Its function is as follows. Putative transcription factor with an activatory role. The chain is Probable transcription factor PosF21 (POSF21) from Arabidopsis thaliana (Mouse-ear cress).